A 324-amino-acid chain; its full sequence is Zinc finger C2HC domain-containing protein 1A (324 aa).

The segment at 15-44 (DLLPCKICGRTFFPLALKKHGPICQKTATK) adopts a C2HC/C3H-type 1 zinc-finger fold. Zn(2+) is bound by residues Cys-19, Cys-22, His-34, and Cys-38. The tract at residues 43–83 (TKKRKTFDSSRQRAEGTDIPTVKPLKPRPEPPKKPSNWRRK) is disordered. A compositionally biased stretch (basic and acidic residues) spans 48-58 (TFDSSRQRAEG). The C2HC/C3H-type 2 zinc-finger motif lies at 118–147 (DYIQCPYCQRRFNENAADRHINFCKEQAAR). Cys-122, Cys-125, His-137, and Cys-141 together coordinate Zn(2+). The disordered stretch occupies residues 149–225 (SNKGKFSTDS…NKPQTLSPSH (77 aa)). Residues 176-187 (SNPPGIPSSGSS) are compositionally biased toward low complexity. 2 stretches are compositionally biased toward polar residues: residues 188 to 198 (RLPQPSTTSKT) and 206 to 223 (KASS…TLSP). Phosphoserine is present on Ser-222. Residue Thr-243 is modified to Phosphothreonine. At Ser-291 the chain carries Phosphoserine.

Belongs to the ZC2HC1 family. Zn(2+) is required as a cofactor.

The chain is Zinc finger C2HC domain-containing protein 1A (Zc2hc1a) from Mus musculus (Mouse).